Here is a 338-residue protein sequence, read N- to C-terminus: Holliday junction branch migration complex subunit RuvB (338 aa).

Residues 1–180 (MTRLVTPDIT…FGVISRLEFY (180 aa)) are large ATPase domain (RuvB-L). ATP is bound by residues leucine 19, arginine 20, glycine 61, lysine 64, threonine 65, threonine 66, 127-129 (EDY), arginine 170, tyrosine 180, and arginine 217. Threonine 65 is a binding site for Mg(2+). The interval 181–251 (TDDELTTIVT…VVDESLKLLE (71 aa)) is small ATPAse domain (RuvB-S). The tract at residues 254-338 (EKGFDHMDRT…PPSSSQGNLF (85 aa)) is head domain (RuvB-H). Residues arginine 290, arginine 309, and arginine 314 each contribute to the DNA site.

The protein belongs to the RuvB family. As to quaternary structure, homohexamer. Forms an RuvA(8)-RuvB(12)-Holliday junction (HJ) complex. HJ DNA is sandwiched between 2 RuvA tetramers; dsDNA enters through RuvA and exits via RuvB. An RuvB hexamer assembles on each DNA strand where it exits the tetramer. Each RuvB hexamer is contacted by two RuvA subunits (via domain III) on 2 adjacent RuvB subunits; this complex drives branch migration. In the full resolvosome a probable DNA-RuvA(4)-RuvB(12)-RuvC(2) complex forms which resolves the HJ.

It is found in the cytoplasm. It catalyses the reaction ATP + H2O = ADP + phosphate + H(+). In terms of biological role, the RuvA-RuvB-RuvC complex processes Holliday junction (HJ) DNA during genetic recombination and DNA repair, while the RuvA-RuvB complex plays an important role in the rescue of blocked DNA replication forks via replication fork reversal (RFR). RuvA specifically binds to HJ cruciform DNA, conferring on it an open structure. The RuvB hexamer acts as an ATP-dependent pump, pulling dsDNA into and through the RuvAB complex. RuvB forms 2 homohexamers on either side of HJ DNA bound by 1 or 2 RuvA tetramers; 4 subunits per hexamer contact DNA at a time. Coordinated motions by a converter formed by DNA-disengaged RuvB subunits stimulates ATP hydrolysis and nucleotide exchange. Immobilization of the converter enables RuvB to convert the ATP-contained energy into a lever motion, pulling 2 nucleotides of DNA out of the RuvA tetramer per ATP hydrolyzed, thus driving DNA branch migration. The RuvB motors rotate together with the DNA substrate, which together with the progressing nucleotide cycle form the mechanistic basis for DNA recombination by continuous HJ branch migration. Branch migration allows RuvC to scan DNA until it finds its consensus sequence, where it cleaves and resolves cruciform DNA. The protein is Holliday junction branch migration complex subunit RuvB of Geobacter metallireducens (strain ATCC 53774 / DSM 7210 / GS-15).